We begin with the raw amino-acid sequence, 108 residues long: Movement protein TGB2 (108 aa).

The Cytoplasmic segment spans residues 1–8 (MPLTPPPN). The chain crosses the membrane as a helical span at residues 9 to 29 (YTGLYIAAALGVSLAAVVALF). Residues 30 to 72 (TRSTLPIVGDSQHNLPHGGRYRDGTKAIDYFKPTKLNSVEPGN) lie on the Lumenal side of the membrane. The chain crosses the membrane as a helical span at residues 73–93 (YWYTQPWLLVILLVALICLSG). At 94 to 108 (RHAQCCPRCNRVHSA) the chain is on the cytoplasmic side.

This sequence belongs to the Tymovirales TGBp2 protein family.

The protein localises to the host endoplasmic reticulum membrane. Its function is as follows. Plays a role in viral cell-to-cell propagation, by facilitating genome transport to neighboring plant cells through plasmosdesmata,. The chain is Movement protein TGB2 from Solanum tuberosum (Potato).